The sequence spans 211 residues: Glycerol-3-phosphate acyltransferase (211 aa).

The next 5 membrane-spanning stretches (helical) occupy residues 8 to 28 (YCLA…LILT), 84 to 104 (LALP…WLGF), 116 to 136 (VLLA…FAVA), 145 to 165 (AALC…GMGL), and 170 to 190 (LAQS…LVFL).

The protein belongs to the PlsY family. Probably interacts with PlsX.

Its subcellular location is the cell inner membrane. The enzyme catalyses an acyl phosphate + sn-glycerol 3-phosphate = a 1-acyl-sn-glycero-3-phosphate + phosphate. The protein operates within lipid metabolism; phospholipid metabolism. Catalyzes the transfer of an acyl group from acyl-phosphate (acyl-PO(4)) to glycerol-3-phosphate (G3P) to form lysophosphatidic acid (LPA). This enzyme utilizes acyl-phosphate as fatty acyl donor, but not acyl-CoA or acyl-ACP. The sequence is that of Glycerol-3-phosphate acyltransferase from Granulibacter bethesdensis (strain ATCC BAA-1260 / CGDNIH1).